Reading from the N-terminus, the 318-residue chain is Homoserine kinase (318 aa).

Position 97 to 107 (97 to 107 (PIGSGLGSSAC)) interacts with ATP.

The protein belongs to the GHMP kinase family. Homoserine kinase subfamily.

The protein resides in the cytoplasm. It catalyses the reaction L-homoserine + ATP = O-phospho-L-homoserine + ADP + H(+). The protein operates within amino-acid biosynthesis; L-threonine biosynthesis; L-threonine from L-aspartate: step 4/5. Functionally, catalyzes the ATP-dependent phosphorylation of L-homoserine to L-homoserine phosphate. The sequence is that of Homoserine kinase from Vibrio parahaemolyticus serotype O3:K6 (strain RIMD 2210633).